The following is a 25-amino-acid chain: Flagellar filament core protein flaB3 (25 aa).

Belongs to the bacterial flagellin family. In terms of assembly, the flagellum consists of an outer layer composed of two sheath proteins, flaA1 (44 kDa) and flaA2 (35 kDa) around a core that contains three proteins flaB1 (37 kDa), flaB2 (34 kDa) and flaB3 (32 kDa).

The protein resides in the periplasmic flagellum. It localises to the periplasm. Its function is as follows. Component of the core of the flagella. This Brachyspira hyodysenteriae (Treponema hyodysenteriae) protein is Flagellar filament core protein flaB3 (flaB3).